The sequence spans 257 residues: MPELLNPAPVAHLRHLLRAHSPLVHCMTNDVVQTFTANVLLAVGASPAMVIDPREAAQFAAIADALLINVGTLTEDRAVAMRAAVEHARQAGKPWTLDPVAVGALTVRTAFCHELLALQPAAIRGNASEILALAGMSAGGRGVDTTDTAAAALPAAQALARRLATVVAVTGEVDYVTDGERVLSVAGGNPLMTRVVGTGCALSAVVAASAALPGDRLENVAAACGLMKQAGEIAARQGGPGSFIPAFLDALYQEVQG.

Methionine 49 provides a ligand contact to substrate. Residues arginine 124 and threonine 170 each contribute to the ATP site. Glycine 197 lines the substrate pocket.

Belongs to the Thz kinase family. Mg(2+) is required as a cofactor.

The enzyme catalyses 5-(2-hydroxyethyl)-4-methylthiazole + ATP = 4-methyl-5-(2-phosphooxyethyl)-thiazole + ADP + H(+). Its pathway is cofactor biosynthesis; thiamine diphosphate biosynthesis; 4-methyl-5-(2-phosphoethyl)-thiazole from 5-(2-hydroxyethyl)-4-methylthiazole: step 1/1. Functionally, catalyzes the phosphorylation of the hydroxyl group of 4-methyl-5-beta-hydroxyethylthiazole (THZ). In Klebsiella pneumoniae (strain 342), this protein is Hydroxyethylthiazole kinase.